A 189-amino-acid polypeptide reads, in one-letter code: Ornithine decarboxylase antizyme 2 (189 aa).

Phosphoserine is present on S186.

The protein belongs to the ODC antizyme family. Interacts with ODC1 and thereby sterically blocks ODC homodimerization. Interacts with AZIN2; this interaction disrupts the interaction between the antizyme and ODC1.

The protein resides in the nucleus. Functionally, ornithine decarboxylase (ODC) antizyme protein that negatively regulates ODC activity and intracellular polyamine biosynthesis and uptake in response to increased intracellular polyamine levels. Binds to ODC monomers, inhibiting the assembly of the functional ODC homodimers. Does not target the ODC monomers for degradation, which allows a protein synthesis-independent restoration of ODC activity. Involved in the translocation of AZIN2 from ER-Golgi intermediate compartment (ERGIC) to the cytosol. In Homo sapiens (Human), this protein is Ornithine decarboxylase antizyme 2 (OAZ2).